Here is a 663-residue protein sequence, read N- to C-terminus: Beta-galactosidase BgaH (663 aa).

Arg103 contacts substrate. Position 107 (Cys107) interacts with Zn(2+). Asn141 lines the substrate pocket. Glu142 serves as the catalytic Proton donor. The Zn(2+) site is built by Cys151, Cys153, and Cys156. The Nucleophile role is filled by Glu311. Residues Trp319 and 359–362 each bind substrate; that span reads EQYH.

The protein belongs to the glycosyl hydrolase 42 family. Homodimer.

The enzyme catalyses Hydrolysis of terminal non-reducing beta-D-galactose residues in beta-D-galactosides.. Requires 4 M NaCl for maximal activity. Loss of activity if DTT or beta-mercaptoethanol is omitted from buffers. Addition of 5-20 mM EDTA, 1 mM Cu(2+) or 1 mM Zn(2+) results in loss of activity. Its function is as follows. When overexpressed, cleaves several different substrates including o-nitrophenyl-beta-D-galactopyranoside (ONPG), chromogen 5-bromo-4-chloro-3-indolyl-beta-D-galactopyranoside (X-Gal) and lactulose, but not lactose. Also has beta-D-fucosidase activity. No beta-L-fucosidase, beta-glucosidase, beta-arabinosidase or beta-xylosidase activity. The protein is Beta-galactosidase BgaH of Haloferax lucentense (strain DSM 14919 / JCM 9276 / NCIMB 13854 / Aa 2.2) (Haloferax alicantei).